Consider the following 140-residue polypeptide: 3-hydroxyacyl-[acyl-carrier-protein] dehydratase FabZ (140 aa).

Histidine 47 is an active-site residue.

Belongs to the thioester dehydratase family. FabZ subfamily.

The protein localises to the cytoplasm. The catalysed reaction is a (3R)-hydroxyacyl-[ACP] = a (2E)-enoyl-[ACP] + H2O. In terms of biological role, involved in unsaturated fatty acids biosynthesis. Catalyzes the dehydration of short chain beta-hydroxyacyl-ACPs and long chain saturated and unsaturated beta-hydroxyacyl-ACPs. This chain is 3-hydroxyacyl-[acyl-carrier-protein] dehydratase FabZ, found in Streptococcus pneumoniae serotype 4 (strain ATCC BAA-334 / TIGR4).